The chain runs to 239 residues: Endonuclease V (239 aa).

Mg(2+)-binding residues include aspartate 48 and aspartate 116.

It belongs to the endonuclease V family. Requires Mg(2+) as cofactor.

The protein resides in the cytoplasm. The enzyme catalyses Endonucleolytic cleavage at apurinic or apyrimidinic sites to products with a 5'-phosphate.. In terms of biological role, DNA repair enzyme involved in the repair of deaminated bases. Selectively cleaves double-stranded DNA at the second phosphodiester bond 3' to a deoxyinosine leaving behind the intact lesion on the nicked DNA. This chain is Endonuclease V, found in Xanthomonas oryzae pv. oryzae (strain MAFF 311018).